We begin with the raw amino-acid sequence, 291 residues long: Bis(5'-nucleosyl)-tetraphosphatase, symmetrical (291 aa).

The protein belongs to the Ap4A hydrolase family.

It carries out the reaction P(1),P(4)-bis(5'-adenosyl) tetraphosphate + H2O = 2 ADP + 2 H(+). In terms of biological role, hydrolyzes diadenosine 5',5'''-P1,P4-tetraphosphate to yield ADP. The sequence is that of Bis(5'-nucleosyl)-tetraphosphatase, symmetrical from Pseudomonas syringae pv. syringae (strain B728a).